A 597-amino-acid polypeptide reads, in one-letter code: U3 small nucleolar RNA-associated protein 6 homolog (597 aa).

HAT repeat units follow at residues 121-153, 156-188, 304-335, 488-520, and 524-557; these read ATKTRLSKVFSAMLAIHSNKPALWIMAAKWEME, LSSESARQLFLRALRFHPECPKLYKEYFRMELM, RKEERCCAVYEEAVKTLPTEAMWKCYITFCLE, GGYKKARAVFKSLQESRPFSVDFFRKMIQFEKE, and CNMANIREYYERALREFGSADSDLWMDYMKEELN.

Belongs to the UTP6 family. As to quaternary structure, part of the small subunit (SSU) processome, composed of more than 70 proteins and the RNA chaperone small nucleolar RNA (snoRNA) U3.

The protein localises to the nucleus. The protein resides in the nucleolus. Part of the small subunit (SSU) processome, first precursor of the small eukaryotic ribosomal subunit. During the assembly of the SSU processome in the nucleolus, many ribosome biogenesis factors, an RNA chaperone and ribosomal proteins associate with the nascent pre-rRNA and work in concert to generate RNA folding, modifications, rearrangements and cleavage as well as targeted degradation of pre-ribosomal RNA by the RNA exosome. Involved in nucleolar processing of pre-18S ribosomal RNA. The polypeptide is U3 small nucleolar RNA-associated protein 6 homolog (Homo sapiens (Human)).